The following is a 355-amino-acid chain: Peptide chain release factor 1 (355 aa).

N5-methylglutamine is present on glutamine 231. Residues 283–303 (NAQNKEARKTQVGSGDRSERI) are disordered.

This sequence belongs to the prokaryotic/mitochondrial release factor family. Post-translationally, methylated by PrmC. Methylation increases the termination efficiency of RF1.

Its subcellular location is the cytoplasm. In terms of biological role, peptide chain release factor 1 directs the termination of translation in response to the peptide chain termination codons UAG and UAA. This chain is Peptide chain release factor 1, found in Helicobacter hepaticus (strain ATCC 51449 / 3B1).